We begin with the raw amino-acid sequence, 381 residues long: Ribosome assembly 1 protein (381 aa).

An N-acetylmethionine modification is found at Met-1. 3 disordered regions span residues 1–38 (MNYNNFENSKGDGHSRLPKPTYSGTLSDGYDESKIKRQ), 164–216 (KDTF…DRDE), and 350–381 (FGSSEDNNKNHYKPNYKNRKPNLSRANFTRNK). Phosphoserine is present on Ser-172. The segment covering 359-371 (NHYKPNYKNRKPN) has biased composition (basic residues).

The protein resides in the nucleus. Functionally, involved in a late nucleoplasmic step of 60S ribosomal subunit assembly. In Saccharomyces cerevisiae (strain ATCC 204508 / S288c) (Baker's yeast), this protein is Ribosome assembly 1 protein (RSA1).